The chain runs to 505 residues: MPPTASLTRSPPTASQTRTLPRASRTRTPPRASLTRSPPTASLRRTPSRASRTRTPPRASLKRTPSRASLTRTLSRASLTRLKSRASHTRTPSRASLTRTPPTASRTRSLPRASRTRTPPRTSQRRMPPRTSQTRTPPRASLRRTPSRASRTRTPPRASLRRTPSRASLTRTPSRASLTRLKSRASHTRTPSRASLTRTPPTASLTRASRTRTPPRTSQTRTPPRASLRRTPSRASLTRTPSRASLTRTPSRASLTRLKSRASHTRTPSRASLTRTPPTASLTRTPPTASLTRTPPRASLTRSPPRASLTRTPPTASLTRSPPTASLTRTPPRASLTRSPPRASLTRTPSTASLTRTPSRASLTRSKSRASHTRTPSRASLTRTPPRASLTRTPPRASLTRSPPTASLTRMPPTASLTRSPPRASLTRTPPRASLTRSPSTASLTRTPPGTWLRRTPPRTSLTRTPPTASLTRTPYTASLTRTPYTASLMRMPYMTSLMTPYKAR.

The segment covering methionine 1 to glutamine 16 has biased composition (polar residues). Positions methionine 1–threonine 474 are disordered. Low complexity-rich tracts occupy residues threonine 17–serine 33 and threonine 40–alanine 59. Residues serine 66 to serine 78 are compositionally biased toward polar residues. Composition is skewed to low complexity over residues serine 96–threonine 122, proline 129–alanine 140, and serine 147–alanine 158. Polar residues-rich tracts occupy residues serine 165 to serine 177 and threonine 188 to proline 200. Positions proline 201–alanine 226 are enriched in low complexity. Polar residues-rich tracts occupy residues serine 233–serine 254, threonine 265–arginine 293, leucine 309–arginine 329, leucine 345–arginine 365, threonine 373–arginine 383, leucine 399–leucine 408, and leucine 435–proline 448. Over residues leucine 453–threonine 474 the composition is skewed to low complexity.

This is an uncharacterized protein from Homo sapiens (Human).